The chain runs to 481 residues: Cholesterol 16,22-dihydroxylase CYP90G4 (481 aa).

The helical transmembrane segment at 4-24 threads the bilayer; it reads SYLSFFVLSSILVLTLIFFFM. C426 contributes to the heme binding site.

This sequence belongs to the cytochrome P450 family. As to expression, mainly expressed in leaves and seed pods and, at low levels, in flowers and stems.

The protein localises to the membrane. It functions in the pathway steroid metabolism; cholesterol metabolism. Functionally, involved in the biosynthesis of spiroketal steroid and saponin natural products from cholesterol such as diosgenin and analogs (e.g. furostanol and spirostanol), plant defense compounds used as main precursors for the industrial production of steroid hormones. During the 5,6-spiroketalization of cholesterol, catalyzes the hydroxylation of cholesterol to form 16S,22S-dihydroxycholesterol and, possibly, the subsequent conversion of 16S,22S-dihydroxycholesterol into 16-oxo-22-hydroxy-cholesterol and 16-hydroxy-22-oxo-cholesterol. 16-hydroxy-22-oxo-cholesterol submit a spontaneous reaction leading to the production of furostanol-type steroid diastereomers, precursors of diosgenin. The polypeptide is Cholesterol 16,22-dihydroxylase CYP90G4 (Trigonella foenum-graecum (Fenugreek)).